The primary structure comprises 1388 residues: Peroxisomal ATPase PEX6 (1388 aa).

Disordered regions lie at residues 1–29, 169–192, 262–287, 302–323, and 346–365; these read MTTS…PALS, EGTF…DTPE, RGQS…DDTA, DAAT…SGVD, and TTAS…IGRG. Residues 14 to 23 show a composition bias toward basic residues; it reads RSPRTRRRRQ. Residues 169-178 are compositionally biased toward basic and acidic residues; the sequence is EGTFFRDRPN. A compositionally biased stretch (acidic residues) spans 310 to 323; it reads TVTETEESDLSGVD. The segment covering 346–358 has biased composition (polar residues); sequence TTASGVSTMQPGT. 1034–1041 lines the ATP pocket; sequence GPPGTGKT. Residues 1297–1388 form a disordered region; sequence GPPEKDRQQQ…GTASDDEGLY (92 aa). Low complexity predominate over residues 1319–1332; that stretch reads VSGSSVVSKGKGKA.

The protein belongs to the AAA ATPase family. In terms of assembly, interacts with PEX1; forming the PEX1-PEX6 AAA ATPase complex, which is composed of a heterohexamer formed by a trimer of PEX1-PEX6 dimers.

Its subcellular location is the cytoplasm. It localises to the cytosol. The protein resides in the peroxisome membrane. The enzyme catalyses ATP + H2O = ADP + phosphate + H(+). Functionally, component of the PEX1-PEX6 AAA ATPase complex, a protein dislocase complex that mediates the ATP-dependent extraction of the PEX5 receptor from peroxisomal membranes, an essential step for PEX5 recycling. Specifically recognizes PEX5 monoubiquitinated at 'Cys-6', and pulls it out of the peroxisome lumen through the PEX2-PEX10-PEX12 retrotranslocation channel. Extraction by the PEX1-PEX6 AAA ATPase complex is accompanied by unfolding of the TPR repeats and release of bound cargo from PEX5. The sequence is that of Peroxisomal ATPase PEX6 (PEX6) from Colletotrichum orbiculare (strain 104-T / ATCC 96160 / CBS 514.97 / LARS 414 / MAFF 240422) (Cucumber anthracnose fungus).